The primary structure comprises 698 residues: DNA ligase (698 aa).

Residues 40-44, 89-90, and glutamate 123 contribute to the NAD(+) site; these read DGEYD and SL. The N6-AMP-lysine intermediate role is filled by lysine 125. The NAD(+) site is built by arginine 146, glutamate 184, lysine 300, and lysine 324. 4 residues coordinate Zn(2+): cysteine 418, cysteine 421, cysteine 436, and cysteine 442. The 79-residue stretch at 620 to 698 folds into the BRCT domain; that stretch reads AGDSPLAGKT…EAEFRAMSGG (79 aa).

Belongs to the NAD-dependent DNA ligase family. LigA subfamily. Requires Mg(2+) as cofactor. The cofactor is Mn(2+).

It catalyses the reaction NAD(+) + (deoxyribonucleotide)n-3'-hydroxyl + 5'-phospho-(deoxyribonucleotide)m = (deoxyribonucleotide)n+m + AMP + beta-nicotinamide D-nucleotide.. DNA ligase that catalyzes the formation of phosphodiester linkages between 5'-phosphoryl and 3'-hydroxyl groups in double-stranded DNA using NAD as a coenzyme and as the energy source for the reaction. It is essential for DNA replication and repair of damaged DNA. The sequence is that of DNA ligase from Rhodospirillum rubrum (strain ATCC 11170 / ATH 1.1.1 / DSM 467 / LMG 4362 / NCIMB 8255 / S1).